Reading from the N-terminus, the 632-residue chain is tRNA uridine 5-carboxymethylaminomethyl modification enzyme MnmG (632 aa).

Residues 15 to 20 (GAGHAG), Ile-127, and Ser-182 each bind FAD. 276 to 290 (GPRYCPSIEDKIVRF) provides a ligand contact to NAD(+). Gln-373 lines the FAD pocket.

It belongs to the MnmG family. In terms of assembly, homodimer. Heterotetramer of two MnmE and two MnmG subunits. It depends on FAD as a cofactor.

The protein resides in the cytoplasm. Functionally, NAD-binding protein involved in the addition of a carboxymethylaminomethyl (cmnm) group at the wobble position (U34) of certain tRNAs, forming tRNA-cmnm(5)s(2)U34. This is tRNA uridine 5-carboxymethylaminomethyl modification enzyme MnmG from Streptococcus pyogenes serotype M4 (strain MGAS10750).